The chain runs to 122 residues: Holo-[acyl-carrier-protein] synthase (122 aa).

The Mg(2+) site is built by Asp-8 and Glu-58.

It belongs to the P-Pant transferase superfamily. AcpS family. Mg(2+) is required as a cofactor.

It is found in the cytoplasm. It carries out the reaction apo-[ACP] + CoA = holo-[ACP] + adenosine 3',5'-bisphosphate + H(+). In terms of biological role, transfers the 4'-phosphopantetheine moiety from coenzyme A to a Ser of acyl-carrier-protein. This Levilactobacillus brevis (strain ATCC 367 / BCRC 12310 / CIP 105137 / JCM 1170 / LMG 11437 / NCIMB 947 / NCTC 947) (Lactobacillus brevis) protein is Holo-[acyl-carrier-protein] synthase.